We begin with the raw amino-acid sequence, 423 residues long: Serine hydroxymethyltransferase (423 aa).

121-123 (GHI) contacts (6S)-5,6,7,8-tetrahydrofolate. Lysine 227 carries the N6-(pyridoxal phosphate)lysine modification. (6S)-5,6,7,8-tetrahydrofolate is bound at residue glutamate 242.

It belongs to the SHMT family. As to quaternary structure, homodimer. The cofactor is pyridoxal 5'-phosphate.

The protein localises to the cytoplasm. It catalyses the reaction 5,10-methylenetetrahydromethanopterin + glycine + H2O = 5,6,7,8-tetrahydromethanopterin + L-serine. It functions in the pathway amino-acid biosynthesis; glycine biosynthesis; glycine from L-serine: step 1/1. In terms of biological role, catalyzes the reversible interconversion of serine and glycine with tetrahydromethanopterin (H4MPT) serving as the one-carbon carrier. Cannot use tetrahydrofolate (THF or H4PteGlu) instead of H4MPT as the pteridine substrate. Also probably exhibits a pteridine-independent aldolase activity toward beta-hydroxyamino acids, producing glycine and aldehydes, via a retro-aldol mechanism. The sequence is that of Serine hydroxymethyltransferase from Methanothermobacter thermautotrophicus (strain ATCC 29096 / DSM 1053 / JCM 10044 / NBRC 100330 / Delta H) (Methanobacterium thermoautotrophicum).